A 187-amino-acid polypeptide reads, in one-letter code: Shikimate kinase (187 aa).

Residue 19 to 24 (GSGKST) participates in ATP binding. Ser-23 contributes to the Mg(2+) binding site. Residues Asp-41, Arg-65, and Gly-87 each contribute to the substrate site. Residue Arg-124 participates in ATP binding. Arg-143 is a substrate binding site. Arg-160 is a binding site for ATP.

The protein belongs to the shikimate kinase family. Monomer. It depends on Mg(2+) as a cofactor.

The protein localises to the cytoplasm. It carries out the reaction shikimate + ATP = 3-phosphoshikimate + ADP + H(+). It participates in metabolic intermediate biosynthesis; chorismate biosynthesis; chorismate from D-erythrose 4-phosphate and phosphoenolpyruvate: step 5/7. Functionally, catalyzes the specific phosphorylation of the 3-hydroxyl group of shikimic acid using ATP as a cosubstrate. This is Shikimate kinase from Rippkaea orientalis (strain PCC 8801 / RF-1) (Cyanothece sp. (strain PCC 8801)).